A 442-amino-acid chain; its full sequence is Elongation factor 1-alpha (442 aa).

The 224-residue stretch at 6-229 (KPHMNLIVIG…ALDNLKPPSV (224 aa)) folds into the tr-type G domain. Residues 15–22 (GHVDHGKS) form a G1 region. Residue 15 to 22 (GHVDHGKS) participates in GTP binding. Residue Ser22 participates in Mg(2+) binding. The segment at 71–75 (GVTID) is G2. The segment at 92–95 (DAPG) is G3. Residues 92–96 (DAPGH) and 154–157 (NKMD) each bind GTP. Residues 154–157 (NKMD) are G4. Residues 195–197 (SAW) form a G5 region.

This sequence belongs to the TRAFAC class translation factor GTPase superfamily. Classic translation factor GTPase family. EF-Tu/EF-1A subfamily.

The protein localises to the cytoplasm. It carries out the reaction GTP + H2O = GDP + phosphate + H(+). In terms of biological role, GTP hydrolase that promotes the GTP-dependent binding of aminoacyl-tRNA to the A-site of ribosomes during protein biosynthesis. The polypeptide is Elongation factor 1-alpha (Ignicoccus hospitalis (strain KIN4/I / DSM 18386 / JCM 14125)).